Reading from the N-terminus, the 359-residue chain is UPF0283 membrane protein Rleg2_1967 (359 aa).

The disordered stretch occupies residues 1–43 (MSKPPSDPPRRPPAAFTYEDEATERHDNGRQAERRRKPESFSE). The span at 23 to 40 (TERHDNGRQAERRRKPES) shows a compositional bias: basic and acidic residues. The next 2 helical transmembrane spans lie at 77 to 97 (FGKIAAGAFGILLSLGIGLWT) and 111 to 131 (LGYLALAVLAVGVLAVLALVI).

This sequence belongs to the UPF0283 family.

The protein resides in the cell inner membrane. This is UPF0283 membrane protein Rleg2_1967 from Rhizobium leguminosarum bv. trifolii (strain WSM2304).